The chain runs to 178 residues: Ribosome maturation factor RimM (178 aa).

Positions 104-177 constitute a PRC barrel domain; sequence SDEYYFYEVI…KIVVKLPEWL (74 aa).

The protein belongs to the RimM family. As to quaternary structure, binds ribosomal protein uS19.

Its subcellular location is the cytoplasm. An accessory protein needed during the final step in the assembly of 30S ribosomal subunit, possibly for assembly of the head region. Essential for efficient processing of 16S rRNA. May be needed both before and after RbfA during the maturation of 16S rRNA. It has affinity for free ribosomal 30S subunits but not for 70S ribosomes. The polypeptide is Ribosome maturation factor RimM (Thermosipho melanesiensis (strain DSM 12029 / CIP 104789 / BI429)).